Consider the following 109-residue polypeptide: Protein reprimo (109 aa).

N-linked (GlcNAc...) asparagine glycans are attached at residues N7 and N18. The chain crosses the membrane as a helical span at residues V56 to L76. The residue at position 98 (S98) is a Phosphoserine.

This sequence belongs to the reprimo family.

The protein resides in the cytoplasm. It localises to the membrane. Its function is as follows. May be involved in the regulation of p53-dependent G2 arrest of the cell cycle. Seems to induce cell cycle arrest by inhibiting CDK1 activity and nuclear translocation of the CDC2 cyclin B1 complex. The chain is Protein reprimo (RPRM) from Bos taurus (Bovine).